Consider the following 160-residue polypeptide: Outer membrane protein MT2024.1 (160 aa).

An N-terminal signal peptide occupies residues 1–22 (MSWSRVIAYGLLPGLALALTCG).

The protein resides in the cell outer membrane. This is Outer membrane protein MT2024.1 from Mycobacterium tuberculosis (strain CDC 1551 / Oshkosh).